Consider the following 161-residue polypeptide: Nucleotide-binding protein Bphyt_3208 (161 aa).

Belongs to the YajQ family.

In terms of biological role, nucleotide-binding protein. This chain is Nucleotide-binding protein Bphyt_3208, found in Paraburkholderia phytofirmans (strain DSM 17436 / LMG 22146 / PsJN) (Burkholderia phytofirmans).